Consider the following 869-residue polypeptide: Alanine--tRNA ligase (869 aa).

The Zn(2+) site is built by His-559, His-563, Cys-660, and His-664.

It belongs to the class-II aminoacyl-tRNA synthetase family. Zn(2+) serves as cofactor.

Its subcellular location is the cytoplasm. The enzyme catalyses tRNA(Ala) + L-alanine + ATP = L-alanyl-tRNA(Ala) + AMP + diphosphate. In terms of biological role, catalyzes the attachment of alanine to tRNA(Ala) in a two-step reaction: alanine is first activated by ATP to form Ala-AMP and then transferred to the acceptor end of tRNA(Ala). Also edits incorrectly charged Ser-tRNA(Ala) and Gly-tRNA(Ala) via its editing domain. This is Alanine--tRNA ligase from Janthinobacterium sp. (strain Marseille) (Minibacterium massiliensis).